A 217-amino-acid polypeptide reads, in one-letter code: Growth hormone variant (217 aa).

The N-terminal stretch at 1 to 26 (MAAGSRTSLLLAFGLLCLSWLQEGSA) is a signal peptide. Intrachain disulfides connect C79-C191 and C208-C215. Phosphoserine is present on S132. N166 is a glycosylation site (N-linked (GlcNAc...) asparagine). The residue at position 176 (S176) is a Phosphoserine.

This sequence belongs to the somatotropin/prolactin family. In terms of assembly, monomer, dimer, trimer, tetramer and pentamer, disulfide-linked or non-covalently associated, in homomeric and heteromeric combinations. Can also form a complex either with GHBP or with the alpha2-macroglobulin complex. As to expression, expressed in the placenta.

The protein resides in the secreted. Plays an important role in growth control. Its major role in stimulating body growth is to stimulate the liver and other tissues to secrete IGF1. It stimulates both the differentiation and proliferation of myoblasts. It also stimulates amino acid uptake and protein synthesis in muscle and other tissues. In Homo sapiens (Human), this protein is Growth hormone variant (GH2).